The sequence spans 490 residues: ATP synthase subunit beta, plastid (490 aa).

170 to 177 (GGAGVGKT) is an ATP binding site.

It belongs to the ATPase alpha/beta chains family. F-type ATPases have 2 components, CF(1) - the catalytic core - and CF(0) - the membrane proton channel. CF(1) has five subunits: alpha(3), beta(3), gamma(1), delta(1), epsilon(1). CF(0) has four main subunits: a(1), b(1), b'(1) and c(9-12).

It localises to the plastid membrane. It carries out the reaction ATP + H2O + 4 H(+)(in) = ADP + phosphate + 5 H(+)(out). Functionally, produces ATP from ADP in the presence of a proton gradient across the membrane. The catalytic sites are hosted primarily by the beta subunits. In Cuscuta exaltata (Tall dodder), this protein is ATP synthase subunit beta, plastid.